The primary structure comprises 300 residues: Transcription initiation factor IIB (300 aa).

The segment at 2–34 adopts a TFIIB-type zinc-finger fold; it reads TKQKVCPVCGSTEFIYDPERGEIVCARCGYVIE. Residues C7, C10, C26, and C29 each contribute to the Zn(2+) site. Repeat copies occupy residues 114 to 197 and 210 to 291.

This sequence belongs to the TFIIB family.

Stabilizes TBP binding to an archaeal box-A promoter. Also responsible for recruiting RNA polymerase II to the pre-initiation complex (DNA-TBP-TFIIB). The chain is Transcription initiation factor IIB from Pyrococcus horikoshii (strain ATCC 700860 / DSM 12428 / JCM 9974 / NBRC 100139 / OT-3).